The sequence spans 599 residues: Cartilage intermediate layer protein 1 (599 aa).

N-linked (GlcNAc...) asparagine glycosylation is found at N47, N416, and N472. Residues Q550 to S560 are compositionally biased toward polar residues. A disordered region spans residues Q550–N599. Residues A573 to G583 are compositionally biased toward low complexity.

As to quaternary structure, monomer. Interacts with TGFB1. Cleaved into 2 chains possibly by a furin-like protease upon or preceding secretion. Specifically expressed in cartilage. Expressed at lower level in young cartilage than in adult cartilage. In adult cartilage, it is highly expressed throughout middeep zones.

The protein resides in the secreted. Its subcellular location is the extracellular space. The protein localises to the extracellular matrix. Its function is as follows. Probably plays a role in cartilage scaffolding. May act by antagonizing TGF-beta1 (TGFB1) and IGF1 functions. Has the ability to suppress IGF1-induced proliferation and sulfated proteoglycan synthesis, and inhibits ligand-induced IGF1R autophosphorylation. May inhibit TGFB1-mediated induction of cartilage matrix genes via its interaction with TGFB1. Overexpression may lead to impair chondrocyte growth and matrix repair and indirectly promote inorganic pyrophosphate (PPi) supersaturation in aging and osteoarthritis cartilage. The chain is Cartilage intermediate layer protein 1 (CILP) from Sus scrofa (Pig).